Here is a 77-residue protein sequence, read N- to C-terminus: Liver-expressed antimicrobial peptide 2 (77 aa).

The N-terminal stretch at 1–22 (MWHLKLCAVLMIFLLLLGQIDG) is a signal peptide. Residues 23–37 (SPIPEVSSAKRRPRR) constitute a propeptide that is removed on maturation. 2 cysteine pairs are disulfide-bonded: cysteine 54–cysteine 65 and cysteine 60–cysteine 70.

Belongs to the LEAP2 family.

The protein resides in the secreted. Functionally, has an antimicrobial activity. The chain is Liver-expressed antimicrobial peptide 2 (LEAP2) from Homo sapiens (Human).